We begin with the raw amino-acid sequence, 556 residues long: GDP-Man:Man(3)GlcNAc(2)-PP-Dol alpha-1,2-mannosyltransferase (556 aa).

At 1-7 the chain is on the lumenal side; the sequence is MANGLFT. The chain crosses the membrane as a helical span at residues 8-28; the sequence is YVAISLFTIGPLLALFIPFVW. Over 29–184 the chain is Cytoplasmic; the sequence is RLVGSSLGWY…RWVLASTWPY (156 aa). Over residues 64 to 79 the composition is skewed to basic and acidic residues; it reads SKSAKGRKAEKEDRDT. The disordered stretch occupies residues 64–86; the sequence is SKSAKGRKAEKEDRDTFNNTEAT. An intramembrane region (helical) is located at residues 185–205; sequence FTLAGQSFGSLIMAWDAFSLL. Residues 206-454 lie on the Cytoplasmic side of the membrane; that stretch reads VPDIFVDTMG…VGVNGMWNEH (249 aa). Positions 455-475 form an intramembrane region, helical; that stretch reads FGIGVVEYQAAGLISVVHDSG. At 476 to 556 the chain is on the cytoplasmic side; it reads GPKLDIVVEV…KAVEKPKSRQ (81 aa).

It belongs to the glycosyltransferase group 1 family. Glycosyltransferase 4 subfamily.

The protein localises to the endoplasmic reticulum membrane. It carries out the reaction an alpha-D-Man-(1-&gt;3)-[alpha-D-Man-(1-&gt;6)]-beta-D-Man-(1-&gt;4)-beta-D-GlcNAc-(1-&gt;4)-alpha-D-GlcNAc-diphospho-di-trans,poly-cis-dolichol + 2 GDP-alpha-D-mannose = an alpha-D-Man-(1-&gt;2)-alpha-D-Man-(1-&gt;2)-alpha-D-Man-(1-&gt;3)-[alpha-D-Man-(1-&gt;6)]-beta-D-Man-(1-&gt;4)-beta-D-GlcNAc-(1-&gt;4)-alpha-D-GlcNAc-diphospho-di-trans,poly-cis-dolichol + 2 GDP + 2 H(+). Its pathway is protein modification; protein glycosylation. Functionally, GDP-Man:Man(3)GlcNAc(2)-PP-Dol alpha-1,2-mannosyltransferase that operates in the biosynthetic pathway of dolichol-linked oligosaccharides, the glycan precursors employed in protein asparagine (N)-glycosylation. The assembly of dolichol-linked oligosaccharides begins on the cytosolic side of the endoplasmic reticulum membrane and finishes in its lumen. The sequential addition of sugars to dolichol pyrophosphate produces dolichol-linked oligosaccharides containing fourteen sugars, including two GlcNAcs, nine mannoses and three glucoses. Once assembled, the oligosaccharide is transferred from the lipid to nascent proteins by oligosaccharyltransferases. Catalyzes, on the cytoplasmic face of the endoplasmic reticulum, the addition of the fourth and fifth mannose residues to the dolichol-linked oligosaccharide chain, to produce Man(5)GlcNAc(2)-PP-dolichol core oligosaccharide. The chain is GDP-Man:Man(3)GlcNAc(2)-PP-Dol alpha-1,2-mannosyltransferase (alg-11) from Neurospora crassa (strain ATCC 24698 / 74-OR23-1A / CBS 708.71 / DSM 1257 / FGSC 987).